Here is a 223-residue protein sequence, read N- to C-terminus: ATP-dependent dethiobiotin synthetase BioD (223 aa).

12–17 lines the ATP pocket; sequence EIGKTH. A Mg(2+)-binding site is contributed by T16. K37 is a catalytic residue. A substrate-binding site is contributed by S41. ATP is bound by residues D52 and 118-121; that span reads EGVG. Mg(2+) contacts are provided by D52 and E118.

The protein belongs to the dethiobiotin synthetase family. As to quaternary structure, homodimer. Mg(2+) serves as cofactor.

It localises to the cytoplasm. It catalyses the reaction (7R,8S)-7,8-diammoniononanoate + CO2 + ATP = (4R,5S)-dethiobiotin + ADP + phosphate + 3 H(+). The protein operates within cofactor biosynthesis; biotin biosynthesis; biotin from 7,8-diaminononanoate: step 1/2. In terms of biological role, catalyzes a mechanistically unusual reaction, the ATP-dependent insertion of CO2 between the N7 and N8 nitrogen atoms of 7,8-diaminopelargonic acid (DAPA, also called 7,8-diammoniononanoate) to form a ureido ring. The polypeptide is ATP-dependent dethiobiotin synthetase BioD (Acidiphilium cryptum (strain JF-5)).